The primary structure comprises 437 residues: GTPase Obg (437 aa).

An Obg domain is found at 2 to 160 (SMFLDTAKIS…RQLELELKIL (159 aa)). The OBG-type G domain maps to 161 to 338 (ADVGLVGFPS…LLEATAELLA (178 aa)). Residues 167 to 174 (GFPSVGKS), 192 to 196 (FTTIV), 214 to 217 (DLPG), 284 to 287 (NKMD), and 319 to 321 (SSL) contribute to the GTP site. Mg(2+) contacts are provided by S174 and T194. In terms of domain architecture, OCT spans 359–437 (GFAEAEKEFE…IGKFEFEFVD (79 aa)).

It belongs to the TRAFAC class OBG-HflX-like GTPase superfamily. OBG GTPase family. Monomer. Requires Mg(2+) as cofactor.

It is found in the cytoplasm. Functionally, an essential GTPase which binds GTP, GDP and possibly (p)ppGpp with moderate affinity, with high nucleotide exchange rates and a fairly low GTP hydrolysis rate. Plays a role in control of the cell cycle, stress response, ribosome biogenesis and in those bacteria that undergo differentiation, in morphogenesis control. In Streptococcus pyogenes serotype M28 (strain MGAS6180), this protein is GTPase Obg.